Reading from the N-terminus, the 287-residue chain is Glutamate racemase (287 aa).

Polar residues predominate over residues 1 to 15 (MATKPQDANTTSREA). Residues 1–25 (MATKPQDANTTSREAITSKADSPPR) form a disordered region. Substrate is bound by residues 32–33 (DS) and 64–65 (YG). Cys-96 (proton donor/acceptor) is an active-site residue. 97–98 (NT) contributes to the substrate binding site. Cys-208 acts as the Proton donor/acceptor in catalysis. 209–210 (TH) serves as a coordination point for substrate.

Belongs to the aspartate/glutamate racemases family.

The catalysed reaction is L-glutamate = D-glutamate. It functions in the pathway cell wall biogenesis; peptidoglycan biosynthesis. Provides the (R)-glutamate required for cell wall biosynthesis. The chain is Glutamate racemase from Yersinia pseudotuberculosis serotype I (strain IP32953).